The following is a 110-amino-acid chain: Large ribosomal subunit protein uL22 (110 aa).

The protein belongs to the universal ribosomal protein uL22 family. As to quaternary structure, part of the 50S ribosomal subunit.

Functionally, this protein binds specifically to 23S rRNA; its binding is stimulated by other ribosomal proteins, e.g. L4, L17, and L20. It is important during the early stages of 50S assembly. It makes multiple contacts with different domains of the 23S rRNA in the assembled 50S subunit and ribosome. The globular domain of the protein is located near the polypeptide exit tunnel on the outside of the subunit, while an extended beta-hairpin is found that lines the wall of the exit tunnel in the center of the 70S ribosome. The chain is Large ribosomal subunit protein uL22 from Shewanella loihica (strain ATCC BAA-1088 / PV-4).